Reading from the N-terminus, the 815-residue chain is Leucine--tRNA ligase (815 aa).

Positions 41-51 (PYPSGTLHVGH) match the 'HIGH' region motif. The 'KMSKS' region motif lies at 576-580 (KMSKS). Position 579 (lysine 579) interacts with ATP.

The protein belongs to the class-I aminoacyl-tRNA synthetase family.

It is found in the cytoplasm. It catalyses the reaction tRNA(Leu) + L-leucine + ATP = L-leucyl-tRNA(Leu) + AMP + diphosphate. In Pseudothermotoga lettingae (strain ATCC BAA-301 / DSM 14385 / NBRC 107922 / TMO) (Thermotoga lettingae), this protein is Leucine--tRNA ligase.